Reading from the N-terminus, the 279-residue chain is Elongation factor Ts (279 aa).

The segment at 79-82 is involved in Mg(2+) ion dislocation from EF-Tu; it reads TDFV.

It belongs to the EF-Ts family.

The protein localises to the cytoplasm. In terms of biological role, associates with the EF-Tu.GDP complex and induces the exchange of GDP to GTP. It remains bound to the aminoacyl-tRNA.EF-Tu.GTP complex up to the GTP hydrolysis stage on the ribosome. This chain is Elongation factor Ts, found in Phytoplasma mali (strain AT).